Here is a 171-residue protein sequence, read N- to C-terminus: Protein BTG1 (171 aa).

Serine 159 carries the post-translational modification Phosphoserine.

It belongs to the BTG family. In terms of assembly, interacts with CNOT7 and CNOT8.

Anti-proliferative protein. This Homo sapiens (Human) protein is Protein BTG1 (BTG1).